A 612-amino-acid polypeptide reads, in one-letter code: Cryptochrome-2 (612 aa).

A CNT2, binds chromophores to sense blue light and mediate CRY dimerization region spans residues 1 to 485 (MKMDKKTIVW…TARELLAKAI (485 aa)). A Photolyase/cryptochrome alpha/beta domain is found at 5-134 (KKTIVWFRRD…SVQSYNGDLL (130 aa)). An FAD-binding site is contributed by Tyr-232. The Mg(2+) site is built by Asn-235 and Ser-243. 244 to 248 (TSLLS) contacts FAD. Mg(2+) is bound at residue His-355. Residues Asn-356 and 387–389 (DAD) each bind FAD. 356-357 (NR) provides a ligand contact to ATP. An ATP-binding site is contributed by Asp-406. Residues 486–612 (SRTREAQIMI…TTSLGKNGCK (127 aa)) are CCT2/CCE2, mediates blue light signaling. The segment at 539 to 576 (GSKRVKPEEEEERDMKKSRGFDERELFSTAESSSSSSV) is disordered. The short motif at 541-555 (KRVKPEEEEERDMKK) is the Nuclear localization signal element. The segment covering 551 to 564 (RDMKKSRGFDEREL) has biased composition (basic and acidic residues). Ser-587 is modified (phosphoserine; by CK1). The segment at 590-612 (KNLEGIQDSSDQITTSLGKNGCK) is disordered. Polar residues predominate over residues 596-612 (QDSSDQITTSLGKNGCK). A phosphoserine mark is found at Ser-598 and Ser-599. Residue Thr-603 is modified to Phosphothreonine; by CK1. At Ser-605 the chain carries Phosphoserine.

It belongs to the DNA photolyase class-1 family. In terms of assembly, homodimer. Blue-light dependent dimerization. Interacts with COP1 and PHYB in the nucleus. Binds reversibly to CIBs proteins such as BHLH63/CIB1, BHLH78/CIB2, BHLH74/CIB4 and BHLH76/CIB5 after blue light illumination to stimulate their transcription factor activities. Interacts with PIF4 and PIF5 in the nucleus in response to low blue light (LBL). Binds to SPA1 in response to blue light, this interaction prevents SPA1/COP1 complex formation but stimulates interaction with COP1, and thus avoid COP1-dependent degradation of the transcription factors CO and HY5 by the proteasome and promotes hypocotyl elongation and floral initiation. Binding to ATP mediates conformational changes which facilitate flavin binding. Interacts with BIC1 in both darkness and light. Interacts with NRP. Requires FAD as cofactor. (6R)-5,10-methylene-5,6,7,8-tetrahydrofolate is required as a cofactor. Post-translationally, phosphorylated by CK1.3 and CK1.4; in response to blue light. Required for degradation. Adopts an open conformation when phosphorylated upon photoexcitation and thus interacts with signaling partner proteins. Not autophosphorylated, even in complex with FAD cofactor. Ubiquitinated; in response to blue light. Mostly expressed in the shoot meristems and root tips, and, to a lower extent, in the cotyledons, hypocotyls, and roots.

It localises to the nucleus. Its subcellular location is the PML body. It is found in the cytoplasm. Photoreceptor that mediates primarily blue light inhibition of hypocotyl elongation and photoperiodic control of floral initiation, and regulates other light responses, including circadian rhythms, tropic growth, stomata opening, guard cell development, root development, bacterial and viral pathogen responses, abiotic stress responses, cell cycles, programmed cell death, apical dominance, fruit and ovule development, seed dormancy, and magnetoreception. Photoexcited cryptochromes interact with signaling partner proteins to alter gene expression at both transcriptional and post-translational levels and, consequently, regulate the corresponding metabolic and developmental programs. Blue-light absorbing flavoprotein that activates reversible flavin photoreduction via an electron transport chain comprising a tryptophan triad (W-321, W-374 and W-397), or via an alternative electron transport that involves small metabolites, including NADPH, NADH, and ATP. The half-life of the activated signaling state is about 16 minutes. Perceives low blue light (LBL) and responds by directly contacting two bHLH transcription factors, PIF4 and PIF5, at chromatin on E-box variant 5'-CA[CT]GTG-3' to promote their activity and stimulate specific gene expression to adapt global physiology (e.g. hypocotyl elongation and hyponastic growth in low blue light). In response to blue light, binds to CIB proteins (e.g. BHLH63/CIB1 and BHLH76/CIB5) to activate transcription and floral initiation. Mediates blue light-induced gene expression, floral initiation and hypocotyl elongation through the interaction with SPA1 that prevents formation of SPA1/COP1 complex but stimulates COP1 binding, and thus inhibits COP1-mediated degradation of transcription factors (e.g. CO and HY5). Promotes flowering time in continuous light (LL). Involved in shortening the circadian clock period, especially at 27 degrees Celsius, in blue light (BL). Required to maintain clock genes expression rhythm. Triggers nuclear accumulation of ROS in response to blue light illumination. Involved in blue light-dependent stomatal opening, transpiration and inhibition of stem and root growth, probably by regulating abscisic acid (ABA). Regulates the timing of flowering by promoting the expression of 'FLOWERING LOCUS T' (FT) in vascular bundles. Negatively regulated by 'FLOWERING LOCUS C' (FLC). General positive regulator of reversible low light-induced chromatin decompaction. Involved in triggering chromatin decondensation during floral transition. Together with phototropins, involved in phototropism regulation by various blue light fluence; blue light attenuates phototropism in high fluence rates (100 umol.m-2.s-1) but enhances phototropism in low fluence rates (&lt;1.0 umol.m-2.s-1). The effect of near-null magnetic field on flowering is altered by changes of blue light cycle and intensity in a CRY1/CRY2-dependent manner. Involved in the strigolactone signaling that regulates hypocotyl growth in response to blue light. In terms of biological role, confers resistance to turnip crinkle virus (TCV) by preventing COP1-mediated proteasome-mediated degradation of RPP8/HRT, thus promoting its stability in light. Exposure to darkness or blue-light induces degradation of CRY2, and in turn of RPP8/HRT, resulting in susceptibility to TCV. The polypeptide is Cryptochrome-2 (Arabidopsis thaliana (Mouse-ear cress)).